The sequence spans 424 residues: Kynureninase (424 aa).

Pyridoxal 5'-phosphate-binding positions include leucine 106, threonine 107, 134 to 137 (FPSD), aspartate 219, histidine 222, and tyrosine 244. Lysine 245 is modified (N6-(pyridoxal phosphate)lysine). Pyridoxal 5'-phosphate contacts are provided by tryptophan 274 and asparagine 302.

It belongs to the kynureninase family. In terms of assembly, homodimer. Pyridoxal 5'-phosphate is required as a cofactor.

The enzyme catalyses L-kynurenine + H2O = anthranilate + L-alanine + H(+). The catalysed reaction is 3-hydroxy-L-kynurenine + H2O = 3-hydroxyanthranilate + L-alanine + H(+). It participates in amino-acid degradation; L-kynurenine degradation; L-alanine and anthranilate from L-kynurenine: step 1/1. It functions in the pathway cofactor biosynthesis; NAD(+) biosynthesis; quinolinate from L-kynurenine: step 2/3. Its function is as follows. Catalyzes the cleavage of L-kynurenine (L-Kyn) and L-3-hydroxykynurenine (L-3OHKyn) into anthranilic acid (AA) and 3-hydroxyanthranilic acid (3-OHAA), respectively. The protein is Kynureninase of Xanthomonas campestris pv. campestris (strain B100).